The primary structure comprises 147 residues: Protein-export protein SecB (147 aa).

It belongs to the SecB family. Homotetramer, a dimer of dimers. One homotetramer interacts with 1 SecA dimer.

It is found in the cytoplasm. Its function is as follows. One of the proteins required for the normal export of preproteins out of the cell cytoplasm. It is a molecular chaperone that binds to a subset of precursor proteins, maintaining them in a translocation-competent state. It also specifically binds to its receptor SecA. In Neisseria gonorrhoeae (strain ATCC 700825 / FA 1090), this protein is Protein-export protein SecB.